Reading from the N-terminus, the 123-residue chain is NADH-quinone oxidoreductase subunit A (123 aa).

A run of 3 helical transmembrane segments spans residues 6 to 26, 66 to 86, and 93 to 113; these read LTPY…AMLI, VVAL…PWAV, and WFGY…LIYI.

This sequence belongs to the complex I subunit 3 family. As to quaternary structure, NDH-1 is composed of 14 different subunits. Subunits NuoA, H, J, K, L, M, N constitute the membrane sector of the complex.

It localises to the cell inner membrane. The catalysed reaction is a quinone + NADH + 5 H(+)(in) = a quinol + NAD(+) + 4 H(+)(out). Its function is as follows. NDH-1 shuttles electrons from NADH, via FMN and iron-sulfur (Fe-S) centers, to quinones in the respiratory chain. The immediate electron acceptor for the enzyme in this species is believed to be ubiquinone. Couples the redox reaction to proton translocation (for every two electrons transferred, four hydrogen ions are translocated across the cytoplasmic membrane), and thus conserves the redox energy in a proton gradient. This is NADH-quinone oxidoreductase subunit A from Myxococcus xanthus (strain DK1622).